Consider the following 367-residue polypeptide: Carbohydrate sulfotransferase 14 (367 aa).

At 1 to 34 (MPPRKKEYGIKRASGSLVHFRAPVSATTIRRHSA) the chain is on the cytoplasmic side. The helical; Signal-anchor for type II membrane protein transmembrane segment at 35–55 (VVPSVLTFAVIVASGGLLLMI) threads the bilayer. Topologically, residues 56–367 (EKGMLNSVQT…PNTTTEYCRH (312 aa)) are lumenal. N-linked (GlcNAc...) asparagine glycosylation occurs at Asn-99. Residues 144–150 (PKVACSN) and 202–210 (REPMARLLS) each bind 3'-phosphoadenylyl sulfate. The N-linked (GlcNAc...) asparagine glycan is linked to Asn-359.

Belongs to the sulfotransferase 2 family.

Its subcellular location is the golgi apparatus membrane. In terms of biological role, catalyzes the transfer of sulfate to position 4 of the N-acetylgalactosamine (GalNAc) residue of dermatan sulfate. The sequence is that of Carbohydrate sulfotransferase 14 (chst14) from Danio rerio (Zebrafish).